Consider the following 309-residue polypeptide: Porphobilinogen deaminase (309 aa).

Residue cysteine 244 is modified to S-(dipyrrolylmethanemethyl)cysteine.

It belongs to the HMBS family. In terms of assembly, monomer. It depends on dipyrromethane as a cofactor.

The catalysed reaction is 4 porphobilinogen + H2O = hydroxymethylbilane + 4 NH4(+). Its pathway is porphyrin-containing compound metabolism; protoporphyrin-IX biosynthesis; coproporphyrinogen-III from 5-aminolevulinate: step 2/4. Its function is as follows. Tetrapolymerization of the monopyrrole PBG into the hydroxymethylbilane pre-uroporphyrinogen in several discrete steps. In Agrobacterium fabrum (strain C58 / ATCC 33970) (Agrobacterium tumefaciens (strain C58)), this protein is Porphobilinogen deaminase.